Here is a 253-residue protein sequence, read N- to C-terminus: Dihydroanticapsin 7-dehydrogenase (253 aa).

9-31 (LITGGASGIGYAAVQAFLGQQAN) is an NAD(+) binding site. Ser-139 contributes to the substrate binding site. The Proton acceptor role is filled by Tyr-152.

Belongs to the short-chain dehydrogenases/reductases (SDR) family.

The catalysed reaction is L-dihydroanticapsin + NAD(+) = L-anticapsin + NADH + H(+). The protein operates within antibiotic biosynthesis; bacilysin biosynthesis. Functionally, part of the bacABCDEFG operon responsible for the biosynthesis of bacilysin, an irreversible inactivator of the glutaminase domain of glucosamine synthetase. Catalyzes the dehydrogenation of the C7-hydroxyl group in the 4S-tetrahydrotyrosine (4S-H4Tyr) to yield anticapsin (epoxycyclohexanonyl-Ala). It is not able to oxidize the 4R-H4Tyr diastereomer and the dihydrobacilysin dipeptide (L-Ala-4S-H4Tyr dipeptide). The sequence is that of Dihydroanticapsin 7-dehydrogenase from Bacillus subtilis (strain 168).